The chain runs to 23 residues: SV40 early leader protein (23 aa).

The segment at 1-23 (MQRPRPPRPLSYSRSSEEAFLEA) is disordered.

The protein belongs to the polyomavirus early leader protein family.

Its function is as follows. May play a role in the lytic cycle. The protein is SV40 early leader protein of Macaca (macaques).